A 95-amino-acid chain; its full sequence is Pyrimidine/purine nucleoside phosphorylase (95 aa).

This sequence belongs to the nucleoside phosphorylase PpnP family.

It catalyses the reaction a purine D-ribonucleoside + phosphate = a purine nucleobase + alpha-D-ribose 1-phosphate. It carries out the reaction adenosine + phosphate = alpha-D-ribose 1-phosphate + adenine. The catalysed reaction is cytidine + phosphate = cytosine + alpha-D-ribose 1-phosphate. The enzyme catalyses guanosine + phosphate = alpha-D-ribose 1-phosphate + guanine. It catalyses the reaction inosine + phosphate = alpha-D-ribose 1-phosphate + hypoxanthine. It carries out the reaction thymidine + phosphate = 2-deoxy-alpha-D-ribose 1-phosphate + thymine. The catalysed reaction is uridine + phosphate = alpha-D-ribose 1-phosphate + uracil. The enzyme catalyses xanthosine + phosphate = alpha-D-ribose 1-phosphate + xanthine. Functionally, catalyzes the phosphorolysis of diverse nucleosides, yielding D-ribose 1-phosphate and the respective free bases. Can use uridine, adenosine, guanosine, cytidine, thymidine, inosine and xanthosine as substrates. Also catalyzes the reverse reactions. This is Pyrimidine/purine nucleoside phosphorylase from Yersinia pestis bv. Antiqua (strain Antiqua).